Consider the following 143-residue polypeptide: Putative pre-16S rRNA nuclease (143 aa).

The protein belongs to the YqgF nuclease family.

It is found in the cytoplasm. In terms of biological role, could be a nuclease involved in processing of the 5'-end of pre-16S rRNA. This Lactobacillus gasseri (strain ATCC 33323 / DSM 20243 / BCRC 14619 / CIP 102991 / JCM 1131 / KCTC 3163 / NCIMB 11718 / NCTC 13722 / AM63) protein is Putative pre-16S rRNA nuclease.